Consider the following 351-residue polypeptide: Ion-translocating oxidoreductase complex subunit D (351 aa).

3 helical membrane passes run 37-57 (YFFGWGTLLQVLLAIITAILA), 88-108 (AIPPLSPWWLTVIGVFFAIVI), and 123-143 (PAMAAYVVLLISFPVQMTTWL). Position 187 is an FMN phosphoryl threonine (Thr-187). The next 4 helical transmembrane spans lie at 214-234 (FAGLGWLWVNVGFLLGGLFLL), 241-261 (WHIPVSFLASLFIVSSLFAVF), 270-290 (IFNLFSGATMLGAFFIATDPV), and 300-317 (LYYGALIGLLVYMIRSWG).

Belongs to the NqrB/RnfD family. The complex is composed of six subunits: RnfA, RnfB, RnfC, RnfD, RnfE and RnfG. Requires FMN as cofactor.

The protein resides in the cell inner membrane. Part of a membrane-bound complex that couples electron transfer with translocation of ions across the membrane. This Aliivibrio salmonicida (strain LFI1238) (Vibrio salmonicida (strain LFI1238)) protein is Ion-translocating oxidoreductase complex subunit D.